A 110-amino-acid polypeptide reads, in one-letter code: U1-lycotoxin-Ls1gg (110 aa).

Positions 1–20 (MKFVLLFGVLLVTLFSYSSA) are cleaved as a signal peptide. Positions 21–44 (EMLDDFDQADEDELLSLIEKEEAR) are excised as a propeptide. Intrachain disulfides connect Cys-54/Cys-71, Cys-61/Cys-89, and Cys-73/Cys-87.

The protein belongs to the neurotoxin 19 (CSTX) family. 03 subfamily. In terms of tissue distribution, expressed by the venom gland.

It is found in the secreted. The sequence is that of U1-lycotoxin-Ls1gg from Lycosa singoriensis (Wolf spider).